We begin with the raw amino-acid sequence, 473 residues long: Photosystem II CP43 reaction center protein (473 aa).

Positions 1–14 (MKTLYSLRRFYPVE) are excised as a propeptide. Thr15 bears the N-acetylthreonine mark. Thr15 is modified (phosphothreonine). The next 5 membrane-spanning stretches (helical) occupy residues 69-93 (LFEVAHFVPEKPMYEQGLILLPHLA), 134-155 (LLGPETLEESFPFFGYVWKDRN), 178-200 (KALYFGGVYDTWAPGGGDVRKIT), 255-275 (KPFAWARRALVWSGEAYLSYS), and 291-312 (WFNNTAYPSEFYGPTGPEASQA). Residue Glu367 participates in [CaMn4O5] cluster binding. Residues 447–471 (RARAAAAGFEKGIDRDFEPVLSMTP) form a helical membrane-spanning segment.

The protein belongs to the PsbB/PsbC family. PsbC subfamily. As to quaternary structure, PSII is composed of 1 copy each of membrane proteins PsbA, PsbB, PsbC, PsbD, PsbE, PsbF, PsbH, PsbI, PsbJ, PsbK, PsbL, PsbM, PsbT, PsbX, PsbY, PsbZ, Psb30/Ycf12, at least 3 peripheral proteins of the oxygen-evolving complex and a large number of cofactors. It forms dimeric complexes. Binds multiple chlorophylls and provides some of the ligands for the Ca-4Mn-5O cluster of the oxygen-evolving complex. It may also provide a ligand for a Cl- that is required for oxygen evolution. PSII binds additional chlorophylls, carotenoids and specific lipids. is required as a cofactor.

The protein localises to the plastid. It is found in the chloroplast thylakoid membrane. Functionally, one of the components of the core complex of photosystem II (PSII). It binds chlorophyll and helps catalyze the primary light-induced photochemical processes of PSII. PSII is a light-driven water:plastoquinone oxidoreductase, using light energy to abstract electrons from H(2)O, generating O(2) and a proton gradient subsequently used for ATP formation. This chain is Photosystem II CP43 reaction center protein, found in Helianthus annuus (Common sunflower).